The primary structure comprises 112 residues: UPF0060 membrane protein SAV_4756 (112 aa).

A run of 4 helical transmembrane segments spans residues 8–28 (ALFVAAALFEIGGAWLVWQGV), 33–53 (GWLWIGAGVMALGVYGFVATL), 62–82 (ILAAYGGVFVAGSLAWGMVAD), and 91–111 (VTGALICLAGMTVIMYAPRGG).

It belongs to the UPF0060 family.

The protein resides in the cell membrane. In Streptomyces avermitilis (strain ATCC 31267 / DSM 46492 / JCM 5070 / NBRC 14893 / NCIMB 12804 / NRRL 8165 / MA-4680), this protein is UPF0060 membrane protein SAV_4756.